The primary structure comprises 109 residues: Phosphoribosyl-ATP pyrophosphatase (109 aa).

The protein belongs to the PRA-PH family.

The protein localises to the cytoplasm. The enzyme catalyses 1-(5-phospho-beta-D-ribosyl)-ATP + H2O = 1-(5-phospho-beta-D-ribosyl)-5'-AMP + diphosphate + H(+). It functions in the pathway amino-acid biosynthesis; L-histidine biosynthesis; L-histidine from 5-phospho-alpha-D-ribose 1-diphosphate: step 2/9. The polypeptide is Phosphoribosyl-ATP pyrophosphatase (Geobacter metallireducens (strain ATCC 53774 / DSM 7210 / GS-15)).